The sequence spans 297 residues: ER membrane protein complex subunit 2 (297 aa).

At Ala-2 the chain carries N-acetylalanine. TPR repeat units lie at residues 87–120, 155–188, and 192–225; these read HRVK…DPTN, QEAW…NPYN, and CQQY…NNRN. Lys-255 is modified (N6-acetyllysine).

Belongs to the EMC2 family. Component of the ER membrane protein complex (EMC).

Its subcellular location is the endoplasmic reticulum membrane. Part of the endoplasmic reticulum membrane protein complex (EMC) that enables the energy-independent insertion into endoplasmic reticulum membranes of newly synthesized membrane proteins. Preferentially accommodates proteins with transmembrane domains that are weakly hydrophobic or contain destabilizing features such as charged and aromatic residues. Involved in the cotranslational insertion of multi-pass membrane proteins in which stop-transfer membrane-anchor sequences become ER membrane spanning helices. It is also required for the post-translational insertion of tail-anchored/TA proteins in endoplasmic reticulum membranes. By mediating the proper cotranslational insertion of N-terminal transmembrane domains in an N-exo topology, with translocated N-terminus in the lumen of the ER, controls the topology of multi-pass membrane proteins like the G protein-coupled receptors. By regulating the insertion of various proteins in membranes, it is indirectly involved in many cellular processes. In Bos taurus (Bovine), this protein is ER membrane protein complex subunit 2.